We begin with the raw amino-acid sequence, 58 residues long: Small ribosomal subunit protein bS21 (58 aa).

Residues 39–58 (DKPSVKKRAKSKAAAKYRSR) are disordered. Positions 43 to 58 (VKKRAKSKAAAKYRSR) are enriched in basic residues.

Belongs to the bacterial ribosomal protein bS21 family.

The sequence is that of Small ribosomal subunit protein bS21 (rpsU) from Chlamydia pneumoniae (Chlamydophila pneumoniae).